The chain runs to 197 residues: Imidazoleglycerol-phosphate dehydratase (197 aa).

This sequence belongs to the imidazoleglycerol-phosphate dehydratase family.

The protein localises to the cytoplasm. It carries out the reaction D-erythro-1-(imidazol-4-yl)glycerol 3-phosphate = 3-(imidazol-4-yl)-2-oxopropyl phosphate + H2O. It functions in the pathway amino-acid biosynthesis; L-histidine biosynthesis; L-histidine from 5-phospho-alpha-D-ribose 1-diphosphate: step 6/9. The polypeptide is Imidazoleglycerol-phosphate dehydratase (Marinomonas sp. (strain MWYL1)).